The chain runs to 77 residues: Acyl carrier protein (77 aa).

The region spanning 2–77 (SDVAEKVKKI…DAIAYIEEKK (76 aa)) is the Carrier domain. Serine 37 carries the O-(pantetheine 4'-phosphoryl)serine modification.

The protein belongs to the acyl carrier protein (ACP) family. Post-translationally, 4'-phosphopantetheine is transferred from CoA to a specific serine of apo-ACP by AcpS. This modification is essential for activity because fatty acids are bound in thioester linkage to the sulfhydryl of the prosthetic group.

The protein resides in the cytoplasm. Its pathway is lipid metabolism; fatty acid biosynthesis. In terms of biological role, carrier of the growing fatty acid chain in fatty acid biosynthesis. The polypeptide is Acyl carrier protein (Desulfovibrio desulfuricans (strain ATCC 27774 / DSM 6949 / MB)).